Consider the following 330-residue polypeptide: Aspartate--ammonia ligase (330 aa).

It belongs to the class-II aminoacyl-tRNA synthetase family. AsnA subfamily.

The protein localises to the cytoplasm. The catalysed reaction is L-aspartate + NH4(+) + ATP = L-asparagine + AMP + diphosphate + H(+). Its pathway is amino-acid biosynthesis; L-asparagine biosynthesis; L-asparagine from L-aspartate (ammonia route): step 1/1. This chain is Aspartate--ammonia ligase, found in Enterobacter sp. (strain 638).